Consider the following 250-residue polypeptide: MRGSPLIRLLATSFLCLLSMVCAQLCRTPCTCPWTPPQCPQGVPLVLDGCGCCKVCARRLTESCEHLHVCEPSQGLVCQPGAGPGGHGAVCLLDEDDGDCEVNGRRYLDGETFKPNCRVLCRCDDGGFTCLPLCSEDVTLPSWDCPRPKRIQVPGKCCPEWVCDQGVTPAIQRSAAQGHQLSALVTPASADAPWPNWSTAWGPCSTTCGLGIATRVSNQNRFCQLEIQRRLCLPRPCLAARSHSSWNSAF.

The first 23 residues, Met-1–Ala-23, serve as a signal peptide directing secretion. 6 cysteine pairs are disulfide-bonded: Cys-22–Cys-50, Cys-26–Cys-52, Cys-32–Cys-53, Cys-39–Cys-56, Cys-64–Cys-78, and Cys-70–Cys-100. The region spanning Gln-24 to Asn-103 is the IGFBP N-terminal domain. A VWFC domain is found at Gly-98–Asp-164. Residues Trp-194–Leu-238 form the TSP type-1 domain. N-linked (GlcNAc...) asparagine glycosylation is present at Asn-196.

It belongs to the CCN family.

It is found in the secreted. Its function is as follows. May play an important role in modulating bone turnover. Promotes the adhesion of osteoblast cells and inhibits the binding of fibrinogen to integrin receptors. In addition, inhibits osteocalcin production. In Rattus norvegicus (Rat), this protein is CCN family member 5 (Ccn5).